We begin with the raw amino-acid sequence, 351 residues long: Uroporphyrinogen decarboxylase (351 aa).

Residues 25 to 29 (RQAGR), D74, Y151, S206, and H325 contribute to the substrate site.

Belongs to the uroporphyrinogen decarboxylase family. In terms of assembly, homodimer.

The protein localises to the cytoplasm. The catalysed reaction is uroporphyrinogen III + 4 H(+) = coproporphyrinogen III + 4 CO2. The protein operates within porphyrin-containing compound metabolism; protoporphyrin-IX biosynthesis; coproporphyrinogen-III from 5-aminolevulinate: step 4/4. Functionally, catalyzes the decarboxylation of four acetate groups of uroporphyrinogen-III to yield coproporphyrinogen-III. This chain is Uroporphyrinogen decarboxylase, found in Pelodictyon phaeoclathratiforme (strain DSM 5477 / BU-1).